A 728-amino-acid polypeptide reads, in one-letter code: Protein Hook homolog 1 (728 aa).

N-acetylmethionine is present on methionine 1. Residues 1–555 form a sufficient for interaction with microtubules region; the sequence is MEETQPPPQP…LKQKLEAHME (555 aa). Residues 12 to 128 enclose the Calponin-homology (CH) domain; sequence LPLCDSLMIW…RLLQLILGCA (117 aa). Coiled-coil stretches lie at residues 169 to 434 and 477 to 658; these read PNDA…RCSQ and LRLQ…AKFR. Residues 169–444 are sufficient for homodimerization, interaction wit HOOK2, HOOK3 and AP4M1; the sequence is PNDAVGELEQ…VQQDHLNQTD (276 aa). Serine 235 bears the Phosphoserine mark. Positions 481–512 are disordered; the sequence is QEGSENERIEELQEQLEQKHRKMNELETEQRL. A compositionally biased stretch (basic and acidic residues) spans 503–512; it reads MNELETEQRL. Residues 657 to 728 form a sufficient for interaction with AKTIP and VPS18 region; sequence FRDYEEKLIV…SVKVPATTSD (72 aa). Threonine 699 carries the post-translational modification Phosphothreonine. Residues serine 719 and serine 727 each carry the phosphoserine modification.

It belongs to the hook family. In terms of assembly, self-associates. Component of the FTS/Hook/FHIP complex (FHF complex), composed of AKTIP/FTS, FHIP1B, and one or more members of the Hook family of proteins HOOK1, HOOK2, and HOOK3. Interacts directly with AKTIP/FTS, HOOK2 and HOOK3. Associates with several subunits of the homotypic vesicular sorting complex (the HOPS complex) including VPS16, VPS18, VPS39 and VPS41; these interactions may be indirect. Interacts with CCDC181. Interacts (via coiled-coil region) with RIMBP3 (via C-terminus). Interacts with LRGUK (via guanylate kinase-like domain). Interacts with microtubules. May interact with CLN3. Interacts with AP4M1; the interaction is direct, mediates the interaction between FTS-Hook-FHIP (FHF) complex and AP-4 and the perinuclear distribution of AP-4.

Its subcellular location is the cytoplasm. It is found in the cytoskeleton. Its function is as follows. Component of the FTS/Hook/FHIP complex (FHF complex). The FHF complex may function to promote vesicle trafficking and/or fusion via the homotypic vesicular protein sorting complex (the HOPS complex). FHF complex promotes the distribution of AP-4 complex to the perinuclear area of the cell. Required for spermatid differentiation. Probably involved in the positioning of the microtubules of the manchette and the flagellum in relation to the membrane skeleton. The polypeptide is Protein Hook homolog 1 (Homo sapiens (Human)).